Here is a 739-residue protein sequence, read N- to C-terminus: Lysyl oxidase homolog 3A (739 aa).

The first 25 residues, 1–25, serve as a signal peptide directing secretion; sequence MLRSELRDMVVAMVLWGILLPFCLS. SRCR domains follow at residues 38-139, 166-272, 293-393, and 403-511; these read FRLA…VICK, LRPL…VSCV, MRLK…VICN, and MRLT…VICS. Intrachain disulfides connect cysteine 64/cysteine 128, cysteine 77/cysteine 138, cysteine 108/cysteine 118, cysteine 196/cysteine 261, cysteine 209/cysteine 271, cysteine 238/cysteine 248, cysteine 318/cysteine 382, cysteine 331/cysteine 392, cysteine 362/cysteine 372, cysteine 433/cysteine 497, cysteine 446/cysteine 510, and cysteine 479/cysteine 489. Asparagine 256 is a glycosylation site (N-linked (GlcNAc...) asparagine). Asparagine 468 carries an N-linked (GlcNAc...) asparagine glycan. Asparagine 611 is a glycosylation site (N-linked (GlcNAc...) asparagine). The segment at residues 620 to 656 is a cross-link (lysine tyrosylquinone (Lys-Tyr)); sequence KASFCLEDTECHEGVSKRYECANFGEQGITVGCWDLY. Tyrosine 656 bears the 2',4',5'-topaquinone mark.

It belongs to the lysyl oxidase family. Cu cation serves as cofactor. The cofactor is lysine tyrosylquinone residue. Post-translationally, the lysine tyrosylquinone cross-link (LTQ) is generated by condensation of the epsilon-amino group of a lysine with a topaquinone produced by oxidation of tyrosine.

It localises to the secreted. The protein resides in the extracellular space. The protein localises to the cytoplasm. Its subcellular location is the nucleus. The enzyme catalyses L-lysyl-[protein] + O2 + H2O = (S)-2-amino-6-oxohexanoyl-[protein] + H2O2 + NH4(+). It carries out the reaction N(6)-acetyl-L-lysyl-[protein] + O2 + H2O = acetamide + (S)-2-amino-6-oxohexanoyl-[protein] + H2O2. Functionally, protein-lysine 6-oxidase that mediates the oxidation of peptidyl lysine residues to allysine in target proteins. Catalyzes the post-translational oxidative deamination of peptidyl lysine residues in precursors of elastin and different types of collagens, a prerequisite in the formation of cross-links between collagens and elastin. Can mediate oxidation of lysine residues that are acetylated. Also able to catalyze deacetylation of lysine residues. This is Lysyl oxidase homolog 3A from Danio rerio (Zebrafish).